The sequence spans 177 residues: Chorismate pyruvate-lyase (177 aa).

Substrate-binding residues include methionine 36, arginine 78, leucine 116, and glutamate 157.

The protein belongs to the UbiC family. In terms of assembly, monomer.

It localises to the cytoplasm. The enzyme catalyses chorismate = 4-hydroxybenzoate + pyruvate. The protein operates within cofactor biosynthesis; ubiquinone biosynthesis. Removes the pyruvyl group from chorismate, with concomitant aromatization of the ring, to provide 4-hydroxybenzoate (4HB) for the ubiquinone pathway. The chain is Chorismate pyruvate-lyase from Pectobacterium atrosepticum (strain SCRI 1043 / ATCC BAA-672) (Erwinia carotovora subsp. atroseptica).